Consider the following 212-residue polypeptide: Lipopolysaccharide core heptose(II)-phosphate phosphatase (212 aa).

An N-terminal signal peptide occupies residues 1-32 (MSIGGVYELAFCRSSLKSKKYFIILLALAAIA).

The protein belongs to the phosphoglycerate mutase family. Ais subfamily.

The protein resides in the periplasm. It functions in the pathway bacterial outer membrane biogenesis; lipopolysaccharide metabolism. In terms of biological role, catalyzes the dephosphorylation of heptose(II) of the outer membrane lipopolysaccharide core. This is Lipopolysaccharide core heptose(II)-phosphate phosphatase from Shigella boydii serotype 4 (strain Sb227).